A 188-amino-acid chain; its full sequence is MGIDINHKHDRVARRTAPKSENPYLRLLSKLYAFLARRTGEKFNAIVLKRLRMSRRNRQPLSLAKLARAVQKAGNENKTVVTLSTVTDDARLYTVPKISVAALHVTEGARARILAAGGEIITLDQLALKSPKGENTVFLQGPRSAREAEKHFGPAPGVPHSHTKPYVRSKGRKFERARGRRASRAYKN.

The tract at residues 147 to 188 (EAEKHFGPAPGVPHSHTKPYVRSKGRKFERARGRRASRAYKN) is disordered. Basic residues-rich tracts occupy residues 161 to 171 (SHTKPYVRSKG) and 178 to 188 (RGRRASRAYKN).

The protein belongs to the eukaryotic ribosomal protein eL18 family.

The protein localises to the cytoplasm. The protein is Large ribosomal subunit protein eL18 (rpl-18) of Caenorhabditis elegans.